The sequence spans 313 residues: Methionyl-tRNA formyltransferase (313 aa).

110–113 serves as a coordination point for (6S)-5,6,7,8-tetrahydrofolate; sequence SLLP.

The protein belongs to the Fmt family.

The catalysed reaction is L-methionyl-tRNA(fMet) + (6R)-10-formyltetrahydrofolate = N-formyl-L-methionyl-tRNA(fMet) + (6S)-5,6,7,8-tetrahydrofolate + H(+). Functionally, attaches a formyl group to the free amino group of methionyl-tRNA(fMet). The formyl group appears to play a dual role in the initiator identity of N-formylmethionyl-tRNA by promoting its recognition by IF2 and preventing the misappropriation of this tRNA by the elongation apparatus. The polypeptide is Methionyl-tRNA formyltransferase (Lysinibacillus sphaericus (strain C3-41)).